The chain runs to 95 residues: Small ribosomal subunit protein bS6 (95 aa).

This sequence belongs to the bacterial ribosomal protein bS6 family.

Its function is as follows. Binds together with bS18 to 16S ribosomal RNA. This Oceanobacillus iheyensis (strain DSM 14371 / CIP 107618 / JCM 11309 / KCTC 3954 / HTE831) protein is Small ribosomal subunit protein bS6.